Consider the following 93-residue polypeptide: Small ribosomal subunit protein uS19 (93 aa).

Belongs to the universal ribosomal protein uS19 family.

Functionally, protein S19 forms a complex with S13 that binds strongly to the 16S ribosomal RNA. The sequence is that of Small ribosomal subunit protein uS19 from Acidothermus cellulolyticus (strain ATCC 43068 / DSM 8971 / 11B).